Here is a 580-residue protein sequence, read N- to C-terminus: Long-chain-fatty-acid--AMP ligase FadD28 (580 aa).

The disordered stretch occupies residues 421–440 (SERTFGGKIVTPSPGTPEGP).

It belongs to the ATP-dependent AMP-binding enzyme family.

It catalyses the reaction holo-[mycocerosate synthase] + a long-chain fatty acid + ATP = a long-chain fatty acyl-[mycocerosate synthase] + AMP + diphosphate. It carries out the reaction a long-chain fatty acid + ATP + H(+) = a long-chain fatty acyl-AMP + diphosphate. The enzyme catalyses holo-[mycocerosate synthase] + a long-chain fatty acyl-AMP = a long-chain fatty acyl-[mycocerosate synthase] + AMP + H(+). It participates in lipid metabolism; fatty acid biosynthesis. In terms of biological role, involved in the biosynthesis of phthiocerol dimycocerosate (PDIM), a cell wall-associated lipid found only in pathogenic mycobacteria. Catalyzes the activation of long-chain fatty acids as acyl-adenylates (acyl-AMP), which are then transferred to the multifunctional polyketide synthase Mas for further chain extension. This Mycobacterium bovis (strain ATCC BAA-935 / AF2122/97) protein is Long-chain-fatty-acid--AMP ligase FadD28 (fadD28).